The sequence spans 429 residues: Ribosomal protein uS12 methylthiotransferase RimO (429 aa).

Residues 2–118 (HNIFLLSLGC…VLRAIGAEYR (117 aa)) enclose the MTTase N-terminal domain. Positions 11, 47, 81, 142, 146, and 149 each coordinate [4Fe-4S] cluster. Residues 128–357 (LTPPHYAFLK…MELQETISQE (230 aa)) form the Radical SAM core domain. In terms of domain architecture, TRAM spans 360 to 427 (REFEGNEIVV…PYDLEGEVIG (68 aa)).

It belongs to the methylthiotransferase family. RimO subfamily. The cofactor is [4Fe-4S] cluster.

It localises to the cytoplasm. The catalysed reaction is L-aspartate(89)-[ribosomal protein uS12]-hydrogen + (sulfur carrier)-SH + AH2 + 2 S-adenosyl-L-methionine = 3-methylsulfanyl-L-aspartate(89)-[ribosomal protein uS12]-hydrogen + (sulfur carrier)-H + 5'-deoxyadenosine + L-methionine + A + S-adenosyl-L-homocysteine + 2 H(+). In terms of biological role, catalyzes the methylthiolation of an aspartic acid residue of ribosomal protein uS12. The chain is Ribosomal protein uS12 methylthiotransferase RimO from Chlorobium limicola (strain DSM 245 / NBRC 103803 / 6330).